A 467-amino-acid chain; its full sequence is H(+)/Cl(-) exchange transporter ClcA (467 aa).

The Cytoplasmic segment spans residues 1 to 30 (MTKRERIIQSVLVKVPKDAINQFLSHGSTP). The chain crosses the membrane as a helical span at residues 31 to 67 (ISVLFLAALVGVLAGLVGTYFEIAVHFVSETRTEWLK). Residues 68–74 (SEIGHLL) lie on the Periplasmic side of the membrane. A helical transmembrane segment spans residues 75–98 (PLWLAAILISAALAFVGYFLVHRF). The short motif at 104-108 (GSGIP) is the Selectivity filter part_1 element. S105 serves as a coordination point for chloride. Positions 107 to 114 (IPEIEGAM) form an intramembrane region, helical. Over 115 to 121 (DNIRPVR) the chain is Cytoplasmic. The next 2 helical transmembrane spans lie at 122-139 (WWRV…ALGS) and 146-164 (EGPT…TDIF). The short motif at 144-148 (GREGP) is the Selectivity filter part_2 element. Residues 165-174 (RVKDDDTRHS) are Cytoplasmic-facing. Intramembrane regions (helical) lie at residues 175–187 (LLAS…LAAA) and 191–199 (PLAGIMFVV). Residues 200 to 212 (EEMRPQFRYSLIS) lie on the Cytoplasmic side of the membrane. The chain crosses the membrane as a helical span at residues 213–230 (IRAVIISAVMANIVFRAI). Residues 231–250 (NGQDAVITMPQYQPPELKAL) lie on the Periplasmic side of the membrane. Residues 251-279 (WLFLLLGGLFGVFGVLFNKLVTVAQDAFV) traverse the membrane as a helical segment. Topologically, residues 280 to 285 (ALHKND) are cytoplasmic. A helical membrane pass occupies residues 286-307 (RKRYLITGTCLGGIFGLLLLYV). The Periplasmic portion of the chain corresponds to 308–327 (PELTGGGIHLIPDVTNGNYS). A run of 2 helical transmembrane segments spans residues 328–347 (VSLL…ICFG) and 353–374 (GIFA…ATAK). The Selectivity filter part_3 motif lies at 353–357 (GIFAP). I354 and F355 together coordinate chloride. Residues 375 to 384 (ILLPDLPIEP) are Periplasmic-facing. The helical intramembrane region spans 385–399 (GMFAIAGMGALFAAT). An intramembrane region (note=Loop between two helices) is located at residues 400-402 (VRA). The segment at residues 403-414 (PITGILLVIEMT) is an intramembrane region (helical). An intramembrane region (note=Loop between two helices) is located at residues 415 to 419 (NNYYL). The helical transmembrane segment at 420–436 (ILPLIITSLGAVICAQI) threads the bilayer. Topologically, residues 437–467 (CGGKPIYSQLLHRTIKNDKLRQQDLPEQQNS) are cytoplasmic. Position 443 (Y443) interacts with chloride.

Belongs to the chloride channel (TC 2.A.49) family. ClcA subfamily. Homodimer.

It localises to the cell inner membrane. The enzyme catalyses 2 chloride(in) + H(+)(out) = 2 chloride(out) + H(+)(in). Its function is as follows. Proton-coupled chloride transporter. Functions as antiport system and exchanges two chloride ions for 1 proton. Probably acts as an electrical shunt for an outwardly-directed proton pump that is linked to amino acid decarboxylation, as part of the extreme acid resistance (XAR) response. The polypeptide is H(+)/Cl(-) exchange transporter ClcA (Vibrio vulnificus (strain CMCP6)).